The following is a 177-amino-acid chain: Large ribosomal subunit protein uL6 (177 aa).

This sequence belongs to the universal ribosomal protein uL6 family. In terms of assembly, part of the 50S ribosomal subunit.

Functionally, this protein binds to the 23S rRNA, and is important in its secondary structure. It is located near the subunit interface in the base of the L7/L12 stalk, and near the tRNA binding site of the peptidyltransferase center. The sequence is that of Large ribosomal subunit protein uL6 from Brucella anthropi (strain ATCC 49188 / DSM 6882 / CCUG 24695 / JCM 21032 / LMG 3331 / NBRC 15819 / NCTC 12168 / Alc 37) (Ochrobactrum anthropi).